The chain runs to 334 residues: Nucleoid-associated protein YpsIP31758_2721 (334 aa).

Belongs to the YejK family.

The protein resides in the cytoplasm. It is found in the nucleoid. In Yersinia pseudotuberculosis serotype O:1b (strain IP 31758), this protein is Nucleoid-associated protein YpsIP31758_2721.